The chain runs to 695 residues: Centrosomal protein kizuna (695 aa).

Positions 1 to 12 (MPRGRGGGGGGL) are enriched in gly residues. The disordered stretch occupies residues 1-24 (MPRGRGGGGGGLRQASATSAPLAS). Residues 15–24 (ASATSAPLAS) show a composition bias toward low complexity. 2 coiled-coil regions span residues 29-57 (ERVG…EYNK) and 102-132 (VEHL…LSKD). 4 disordered regions span residues 261–313 (EIGS…SDRE), 351–391 (HSAW…SDLT), 444–465 (QSFP…EKVP), and 633–695 (SEAS…FYDT). 2 stretches are compositionally biased toward polar residues: residues 263-274 (GSSTQHSKSNLS) and 282-297 (LHSS…NSIT). 2 stretches are compositionally biased toward basic and acidic residues: residues 299-313 (LKCD…SDRE) and 360-377 (DLDH…KHEE). Over residues 382-391 (GSSCSSSDLT) the composition is skewed to low complexity. At threonine 391 the chain carries Phosphothreonine; by PLK1. A compositionally biased stretch (basic and acidic residues) spans 448-465 (DSKREPSPDSPRQPEKVP). Positions 633–645 (SEASFSSSEGSPL) are enriched in low complexity. 3 positions are modified to phosphoserine: serine 667, serine 670, and serine 672. The segment covering 676–686 (AALRPRDHDMP) has biased composition (basic and acidic residues).

This sequence belongs to the kizuna family. In terms of assembly, interacts with AKAP9, CEP72, ODF2, PCNT and TUBGCP2. Post-translationally, phosphorylation at Thr-391 by PLK1 is not needed for centrosomal localization or pericentriolar material expansion but is indispensable for spindle-pole stabilization.

It localises to the cytoplasm. It is found in the cytoskeleton. The protein localises to the microtubule organizing center. Its subcellular location is the centrosome. The protein resides in the cilium basal body. Its function is as follows. Centrosomal protein required for establishing a robust mitotic centrosome architecture that can endure the forces that converge on the centrosomes during spindle formation. Required for stabilizing the expanded pericentriolar material around the centriole. The polypeptide is Centrosomal protein kizuna (Kiz) (Mus musculus (Mouse)).